Reading from the N-terminus, the 2561-residue chain is Squalestatin hexaketide synthase (2561 aa).

A disordered region spans residues 1–77; it reads MDVSKEEGQR…NGTTNITPEF (77 aa). The segment covering 20 to 74 has biased composition (low complexity); it reads NETTNGHTNGYTNGHTNGHTNGTTNATTNGTTNGTMNGTTNGTTNRTTNGTTNIT. One can recognise a Ketosynthase family 3 (KS3) domain in the interval 83 to 503; that stretch reads QVPVAICGIG…GSNTHIIIDS (421 aa). Catalysis depends on for beta-ketoacyl synthase activity residues cysteine 253, histidine 390, and histidine 427. The interval 603–925 is malonyl-CoA:ACP transacylase (MAT) domain; the sequence is FIFTGQGAQW…LEAIGKLFCF (323 aa). Residues 972–1101 form an N-terminal hotdog fold region; the sequence is HELLGERSLE…GLVTASVVIS (130 aa). A dehydratase (DH) domain region spans residues 972-1253; sequence HELLGERSLE…RGFKCKRTDE (282 aa). Positions 972 to 1257 constitute a PKS/mFAS DH domain; it reads HELLGERSLE…CKRTDESFIQ (286 aa). Catalysis depends on histidine 1004, which acts as the Proton acceptor; for dehydratase activity. The tract at residues 1112–1257 is C-terminal hotdog fold; that stretch reads TFPRKVDTSR…CKRTDESFIQ (146 aa). The active-site Proton donor; for dehydratase activity is the aspartate 1174. The interval 1421–1599 is methyltransferase (CMet) domain; it reads SFFQAAGLNK…GFEGAGTVVL (179 aa). Residues 1826–2146 are enoyl reductase (ER) (ER) domain; it reads GMLNTLHWVG…RGVHMGRIVV (321 aa). Positions 2170 to 2343 are ketoreductase (KR) domain; that stretch reads STYLLTGGMG…PASVIDIAAI (174 aa). The Carrier domain occupies 2472-2550; it reads VLFAQEIAKR…SLGRLATKRL (79 aa). Serine 2509 bears the O-(pantetheine 4'-phosphoryl)serine mark.

The protein operates within secondary metabolite biosynthesis. Functionally, highly reducing polyketide synthase (HR-PKS); part of the gene cluster that mediates the biosynthesis of squalestatin S1 (SQS1, also known as zaragozic acid A), a heavily oxidized fungal polyketide that offers potent cholesterol lowering activity by targeting squalene synthase (SS). SQS1 is composed of a 2,8-dioxobicyclic[3.2.1]octane-3,4,5-tricarboxyclic acid core that is connected to two lipophilic polyketide arms. These initial steps feature the priming of an unusual benzoic acid starter unit onto the highly reducing polyketide synthase pks2, followed by oxaloacetate extension and product release to generate a tricarboxylic acid containing product. The phenylalanine ammonia lyase (PAL) M7 and the acyl-CoA ligase M9 are involved in transforming phenylalanine into benzoyl-CoA. The citrate synthase-like protein R3 is involved in connecting the C-alpha-carbons of the hexaketide chain and oxaloacetate to afford the tricarboxylic acid unit. The potential hydrolytic enzymes, M8 and M10, are in close proximity to pks2 and may participate in product release. On the other side, the tetraketide arm is synthesized by a the squalestatin tetraketide synthase pks1 and enzymatically esterified to the core in the last biosynthetic step, by the acetyltransferase M4. The biosynthesis of the tetraketide must involve 3 rounds of chain extension. After the first and second rounds methyl-transfer occurs, and in all rounds of extension the ketoreductase and dehydratase are active. The enoyl reductase and C-MeT of pks1 are not active in the final round of extension. The acetyltransferase M4 appears to have a broad substrate selectivity for its acyl CoA substrate, allowing the in vitro synthesis of novel squalestatins. The biosynthesis of SQS1 requires several oxidative steps likely performed by oxidoreductases M1, R1 and R2. Finally, in support of the identification of the cluster as being responsible for SQS1 production, the cluster contains a gene encoding a putative squalene synthase (SS) R6, suggesting a likely mechanism for self-resistance. This chain is Squalestatin hexaketide synthase, found in Phoma sp. (strain ATCC 20986 / MF5453).